A 128-amino-acid polypeptide reads, in one-letter code: Otoraplin (128 aa).

The signal sequence occupies residues 1–18; sequence MARILILLLGGLVVLCAG. Intrachain disulfides connect Cys32-Cys37 and Cys55-Cys127. In terms of domain architecture, SH3 spans 39–110; it reads YTISLARAQE…PSNLVKEQRV (72 aa).

The protein belongs to the MIA/OTOR family. As to expression, highly expressed in cochlea.

Its subcellular location is the secreted. The sequence is that of Otoraplin (Otor) from Mus musculus (Mouse).